The following is a 311-amino-acid chain: Aquaporin-1 (311 aa).

At 1–16 (MHPQVASLFDNVYEDL) the chain is on the cytoplasmic side. A helical membrane pass occupies residues 17-37 (AAATLEFIGTAFFLLFGLGGI). The Extracellular portion of the chain corresponds to 38–56 (QASTAEDTASSQPPASGIE). The chain crosses the membrane as a helical span at residues 57–77 (HVLYISTCMGFSLVVSAWLFF). A topological domain (cytoplasmic) is located at residue arginine 78. A helical membrane pass occupies residues 79–99 (VTGGLFNPNISFALLLVGGLK). Residues 85 to 87 (NPN) carry the NPA 1 motif. Position 100 (proline 100) is a topological domain, extracellular. A helical membrane pass occupies residues 101–121 (LRFVLFCIAQLTGAIAGAAIV). At 122–143 (RGLTSAPLSVNNVLQQGTSAAQ) the chain is on the cytoplasmic side. Residues 144–164 (GVFIEMFITAALVLSVLMLAA) traverse the membrane as a helical segment. Over 165–168 (EKHE) the chain is Extracellular. Residues 169 to 189 (ATPFAPVGIGLTLFACHLFAV) traverse the membrane as a helical segment. Topologically, residues 190–215 (YYTGAAMNSARAFGPAVISGFPEPQH) are cytoplasmic. An NPA 2 motif is present at residues 197–199 (NSA). A helical transmembrane segment spans residues 216-236 (WVYWVGPFLGSLLGAGFYATL). The Extracellular segment spans residues 237–311 (KHYKYWRLNP…TSSRTNFSPV (75 aa)). The disordered stretch occupies residues 276 to 311 (DEETRNGCASNEEGVRATGDEKSSNATSSRTNFSPV). Over residues 288 to 298 (EGVRATGDEKS) the composition is skewed to basic and acidic residues. Over residues 299-311 (SNATSSRTNFSPV) the composition is skewed to polar residues. Asparagine 300 carries N-linked (GlcNAc...) asparagine glycosylation.

The protein belongs to the MIP/aquaporin (TC 1.A.8) family.

It localises to the cell membrane. The catalysed reaction is H2O(in) = H2O(out). It catalyses the reaction H2O2(out) = H2O2(in). The enzyme catalyses nitric oxide(out) = nitric oxide(in). It carries out the reaction CO2(out) = CO2(in). Water channel required to facilitate the transport of water across membranes. Also mediates the transport nitric oxide, hydrogen peroxide and carbon dioxide across the membrane. Required for Hartig net development in trembling aspen trees. Contributes in fungal cellular processes during the basidiocarp formation. The polypeptide is Aquaporin-1 (Laccaria bicolor (Bicoloured deceiver)).